The sequence spans 41 residues: MKIRNSLRSLRNRHRDNRLVRRKGRVYIINKTNRRFKARQG.

Belongs to the bacterial ribosomal protein bL36 family.

This Parvibaculum lavamentivorans (strain DS-1 / DSM 13023 / NCIMB 13966) protein is Large ribosomal subunit protein bL36.